Consider the following 79-residue polypeptide: Acyl carrier protein (79 aa).

The Carrier domain maps to 2 to 77; it reads SSIEDRVKKI…QAVDYIKKHL (76 aa). Ser-37 is subject to O-(pantetheine 4'-phosphoryl)serine.

The protein belongs to the acyl carrier protein (ACP) family. In terms of processing, 4'-phosphopantetheine is transferred from CoA to a specific serine of apo-ACP by AcpS. This modification is essential for activity because fatty acids are bound in thioester linkage to the sulfhydryl of the prosthetic group.

It localises to the cytoplasm. It functions in the pathway lipid metabolism; fatty acid biosynthesis. Carrier of the growing fatty acid chain in fatty acid biosynthesis. This chain is Acyl carrier protein, found in Halorhodospira halophila (strain DSM 244 / SL1) (Ectothiorhodospira halophila (strain DSM 244 / SL1)).